We begin with the raw amino-acid sequence, 261 residues long: Pantothenate synthetase (261 aa).

29 to 36 (MGALHNGH) contributes to the ATP binding site. H36 functions as the Proton donor in the catalytic mechanism. Position 60 (Q60) interacts with (R)-pantoate. Q60 contributes to the beta-alanine binding site. An ATP-binding site is contributed by 147–150 (GEKD). A (R)-pantoate-binding site is contributed by Q153. 184–187 (LSSR) is an ATP binding site.

Belongs to the pantothenate synthetase family. As to quaternary structure, homodimer.

It localises to the cytoplasm. It carries out the reaction (R)-pantoate + beta-alanine + ATP = (R)-pantothenate + AMP + diphosphate + H(+). It participates in cofactor biosynthesis; (R)-pantothenate biosynthesis; (R)-pantothenate from (R)-pantoate and beta-alanine: step 1/1. Catalyzes the condensation of pantoate with beta-alanine in an ATP-dependent reaction via a pantoyl-adenylate intermediate. This is Pantothenate synthetase from Francisella tularensis subsp. novicida (strain U112).